The primary structure comprises 324 residues: Non-homologous end joining protein Ku 1 (324 aa).

The Ku domain occupies 10–193 (INFGLVTIPV…AKPSDKEIQM (184 aa)). Residues 256 to 324 (QARRGRGGQV…SGGRRRRRAS (69 aa)) are disordered. The span at 281 to 292 (AELDKKAKELGI) shows a compositional bias: basic and acidic residues.

This sequence belongs to the prokaryotic Ku family. Homodimer. Interacts with LigD.

Functionally, with LigD forms a non-homologous end joining (NHEJ) DNA repair enzyme, which repairs dsDNA breaks with reduced fidelity. Binds linear dsDNA with 5'- and 3'- overhangs but not closed circular dsDNA nor ssDNA. Recruits and stimulates the ligase activity of LigD. In Saccharopolyspora erythraea (strain ATCC 11635 / DSM 40517 / JCM 4748 / NBRC 13426 / NCIMB 8594 / NRRL 2338), this protein is Non-homologous end joining protein Ku 1.